The primary structure comprises 332 residues: Biotin synthase (332 aa).

The 230-residue stretch at 46–275 (SDIQRASLLS…RARVRLSAGR (230 aa)) folds into the Radical SAM core domain. Residues cysteine 61, cysteine 65, and cysteine 68 each coordinate [4Fe-4S] cluster. Residues cysteine 106, cysteine 138, cysteine 198, and arginine 270 each contribute to the [2Fe-2S] cluster site.

This sequence belongs to the radical SAM superfamily. Biotin synthase family. As to quaternary structure, homodimer. [4Fe-4S] cluster serves as cofactor. Requires [2Fe-2S] cluster as cofactor.

The enzyme catalyses (4R,5S)-dethiobiotin + (sulfur carrier)-SH + 2 reduced [2Fe-2S]-[ferredoxin] + 2 S-adenosyl-L-methionine = (sulfur carrier)-H + biotin + 2 5'-deoxyadenosine + 2 L-methionine + 2 oxidized [2Fe-2S]-[ferredoxin]. The protein operates within cofactor biosynthesis; biotin biosynthesis; biotin from 7,8-diaminononanoate: step 2/2. Functionally, catalyzes the conversion of dethiobiotin (DTB) to biotin by the insertion of a sulfur atom into dethiobiotin via a radical-based mechanism. The polypeptide is Biotin synthase (Methylobacterium sp. (strain 4-46)).